The sequence spans 273 residues: Dermonecrotic toxin SdSicTox-betaIF1 (273 aa).

Histidine 5 is a catalytic residue. Residues glutamate 25 and aspartate 27 each contribute to the Mg(2+) site. The active-site Nucleophile is the histidine 41. 2 disulfide bridges follow: cysteine 45/cysteine 51 and cysteine 47/cysteine 189.

This sequence belongs to the arthropod phospholipase D family. Class II subfamily. Mg(2+) is required as a cofactor. In terms of tissue distribution, expressed by the venom gland.

It is found in the secreted. It catalyses the reaction an N-(acyl)-sphingosylphosphocholine = an N-(acyl)-sphingosyl-1,3-cyclic phosphate + choline. It carries out the reaction an N-(acyl)-sphingosylphosphoethanolamine = an N-(acyl)-sphingosyl-1,3-cyclic phosphate + ethanolamine. The enzyme catalyses a 1-acyl-sn-glycero-3-phosphocholine = a 1-acyl-sn-glycero-2,3-cyclic phosphate + choline. The catalysed reaction is a 1-acyl-sn-glycero-3-phosphoethanolamine = a 1-acyl-sn-glycero-2,3-cyclic phosphate + ethanolamine. Dermonecrotic toxins cleave the phosphodiester linkage between the phosphate and headgroup of certain phospholipids (sphingolipid and lysolipid substrates), forming an alcohol (often choline) and a cyclic phosphate. This toxin acts on sphingomyelin (SM). It may also act on ceramide phosphoethanolamine (CPE), lysophosphatidylcholine (LPC) and lysophosphatidylethanolamine (LPE), but not on lysophosphatidylserine (LPS), and lysophosphatidylglycerol (LPG). It acts by transphosphatidylation, releasing exclusively cyclic phosphate products as second products. Induces dermonecrosis, hemolysis, increased vascular permeability, edema, inflammatory response, and platelet aggregation. The protein is Dermonecrotic toxin SdSicTox-betaIF1 of Sicarius cf. damarensis (strain GJB-2008) (Six-eyed sand spider).